We begin with the raw amino-acid sequence, 405 residues long: MTSRRPDSFEGLGYRGREDPAFSGGYSGRSFNNSSSSDLQNWVTTPPDIPGSRNLHFDDRTPQFETAPDEAQSAAPPSEQLNRFAGFGIGLASLFTENVLAHPCIVFRRQCQVNYHARCYHLSPMTAISVMYNVTKTQGPKALWKGMGSTFVVQGVTLGTEGIISECTPLPRELSHKWNPKQVVGHLVLKGLTYVVAMPFYSASLIETVQSEIIRDNPGILDCVKEGLGRVMGMGIPHSKRLLPLWNLVLPTVLHGILHYIISSSIQRLVLYLLRRRNNGSPKHSSPGSGMDTVQSMLDAYFPELMASFAASLCADVLLFPLETVLHRLHIQGTRTIIDNTDLGFEVLPINTQYEGMRDCINAIRREEGTMGFYKGFGSIVVQYSLHATVLQITKMIYSTLLRNA.

The segment at 1 to 77 (MTSRRPDSFE…PDEAQSAAPP (77 aa)) is disordered. Over residues 22-37 (FSGGYSGRSFNNSSSS) the composition is skewed to low complexity. The stretch at 80–171 (QLNRFAGFGI…GIISECTPLP (92 aa)) is one Solcar 1 repeat. Transmembrane regions (helical) follow at residues 87 to 107 (FGIG…CIVF), 151 to 171 (FVVQ…TPLP), 183 to 203 (VVGH…FYSA), 242 to 262 (LLPL…HYII), 302 to 322 (FPEL…LFPL), and 371 to 391 (MGFY…ATVL). The stretch at 299–401 (DAYFPELMAS…QITKMIYSTL (103 aa)) is one Solcar 2 repeat.

This sequence belongs to the mitochondrial carrier (TC 2.A.29) family.

The protein localises to the mitochondrion outer membrane. Functionally, transmembrane protein of the mitochondrial outer membrane that controls mitochondrial organization. May regulate the biogenesis and dynamics of mitochondrial cristae, the inwards folds of the inner mitochondrial membrane. Could regulate mitochondrial lipid homeostasis and thereby mitochondrial fission. The protein is Mitochondrial outer membrane protein SLC25A46 (slc25a46) of Danio rerio (Zebrafish).